Reading from the N-terminus, the 114-residue chain is Type 4 adapter protein IcmS (114 aa).

As to quaternary structure, the T4BSS is a complex nanomachine composed of several subcomplexes. This subunit is part of the Type IV Coupling Complex (T4CC), a subcomplex composed of the DotLMNYZ core and the IcmSW-LvgA adapter subunits, linked by the C-terminal tail of DotL. Interacts with IcmW. IcmS and IcmW form a stable complex. Interacts directly with the type 4 coupling protein DotL. Interacts with LvgA. Interacts with effector proteins.

It localises to the cytoplasm. With respect to regulation, interaction with DotL is critical for the export of IcmSW-dependent substrates. Component of the Dot/Icm type IVB secretion system (T4BSS), which is used to inject bacterial effector proteins into eukaryotic host cells. Part of a subcomplex which recruits effector proteins and delivers them to the core transmembrane subcomplex. The IcmS/IcmW protein complex plays an important role in protein translocation by interacting with multiple Dot/Icm effector proteins to facilitate their translocation into host cells. Interaction promotes conformational changes in the effector protein, which may facilitate display of a C-terminal translocation signal. May maintain the substrates in a translocation competent form. Required for intracellular growth in host cells, replicative phagosome formation and phagosome trafficking. IcmS is required for IcmW stability. The chain is Type 4 adapter protein IcmS from Legionella pneumophila subsp. pneumophila (strain Philadelphia 1 / ATCC 33152 / DSM 7513).